We begin with the raw amino-acid sequence, 145 residues long: Large ribosomal subunit protein uL15 (145 aa).

The segment at 1–50 is disordered; sequence MRLNTLSPAAGSKPEKQRRGRGIGSGLGKTGGRGVKGQTSRSGGGKVRAG. Residues 22-35 show a composition bias toward gly residues; the sequence is GIGSGLGKTGGRGV.

It belongs to the universal ribosomal protein uL15 family. In terms of assembly, part of the 50S ribosomal subunit.

Functionally, binds to the 23S rRNA. This chain is Large ribosomal subunit protein uL15, found in Aeromonas salmonicida (strain A449).